We begin with the raw amino-acid sequence, 563 residues long: Membrane protein insertase YidC (563 aa).

A helical membrane pass occupies residues Met-1–Leu-21. Positions Ala-43–Pro-62 are disordered. 5 helical membrane-spanning segments follow: residues Leu-344–Leu-364, Ile-370–Phe-390, Leu-440–Leu-460, Trp-471–Met-491, and Pro-518–Val-538.

It belongs to the OXA1/ALB3/YidC family. Type 1 subfamily. In terms of assembly, interacts with the Sec translocase complex via SecD. Specifically interacts with transmembrane segments of nascent integral membrane proteins during membrane integration.

The protein resides in the cell inner membrane. Required for the insertion and/or proper folding and/or complex formation of integral membrane proteins into the membrane. Involved in integration of membrane proteins that insert both dependently and independently of the Sec translocase complex, as well as at least some lipoproteins. Aids folding of multispanning membrane proteins. The polypeptide is Membrane protein insertase YidC (Pseudomonas syringae pv. syringae (strain B728a)).